We begin with the raw amino-acid sequence, 707 residues long: SEC14-like protein 5 (707 aa).

Residues 3–175 (QKYQSPVRVY…YLNELISQGI (173 aa)) enclose the PRELI/MSF1 domain. Residues 201 to 211 (RSNQAEQTASQ) are compositionally biased toward polar residues. Residues 201 to 232 (RSNQAEQTASQGPCKADAGSHSLAAEPSTPDT) form a disordered region. The CRAL-TRIO domain occupies 315-491 (PPRVLEEYYA…FLGGECVCNI (177 aa)). A GOLD domain is found at 518–667 (TETIYQSSCV…KCKLMYYFEV (150 aa)). Positions 686 to 695 (FSQLSGVTNT) are enriched in polar residues. A disordered region spans residues 686 to 707 (FSQLSGVTNTSSKSHSSSLISR). Residues 696 to 707 (SSKSHSSSLISR) are compositionally biased toward low complexity.

The polypeptide is SEC14-like protein 5 (sec14l1) (Xenopus tropicalis (Western clawed frog)).